A 479-amino-acid chain; its full sequence is Ribosomal RNA small subunit methyltransferase F (479 aa).

S-adenosyl-L-methionine is bound by residues 125 to 131 (AAAPGSK), E149, D176, and D194. Residue C247 is the Nucleophile of the active site.

It belongs to the class I-like SAM-binding methyltransferase superfamily. RsmB/NOP family.

The protein localises to the cytoplasm. It carries out the reaction cytidine(1407) in 16S rRNA + S-adenosyl-L-methionine = 5-methylcytidine(1407) in 16S rRNA + S-adenosyl-L-homocysteine + H(+). Functionally, specifically methylates the cytosine at position 1407 (m5C1407) of 16S rRNA. This Escherichia coli (strain UTI89 / UPEC) protein is Ribosomal RNA small subunit methyltransferase F.